The sequence spans 46 residues: Small polypeptide DEVIL 5 (46 aa).

Residues 8–24 (VGGTKRKMWSRGVGGVV) traverse the membrane as a helical segment. The interval 15–46 (MWSRGVGGVVREQKAKLYIIRRCVVMLLCWHD) is required for DVL/RTFL small polypeptide activity.

The protein belongs to the DVL/RTFL small polypeptides family. As to expression, mostly expressed in roots and flowers, and, to a lower extent, in leaves and stems.

It localises to the cell membrane. In terms of biological role, small polypeptide acting as a regulatory molecule which coordinates cellular responses required for differentiation, growth and development, including leaves shape, pedicule elongation, inflorescence organization and fruit maturation, probably by restricting polar cell proliferation in lateral organs and coordinating socket cell recruitment and differentiation at trichome sites. The polypeptide is Small polypeptide DEVIL 5 (Arabidopsis thaliana (Mouse-ear cress)).